The following is a 718-amino-acid chain: Threonine--tRNA ligase, mitochondrial (718 aa).

Ser-52 is modified (phosphoserine). Residues 55-121 (QKEPRTIKIS…ETDSDLRFLT (67 aa)) enclose the TGS domain.

The protein belongs to the class-II aminoacyl-tRNA synthetase family. Homodimer.

It localises to the mitochondrion matrix. It catalyses the reaction tRNA(Thr) + L-threonine + ATP = L-threonyl-tRNA(Thr) + AMP + diphosphate + H(+). Its function is as follows. Catalyzes the attachment of threonine to tRNA(Thr) in a two-step reaction: threonine is first activated by ATP to form Thr-AMP and then transferred to the acceptor end of tRNA(Thr). Also edits incorrectly charged tRNA(Thr) via its editing domain. This chain is Threonine--tRNA ligase, mitochondrial (TARS2), found in Homo sapiens (Human).